Reading from the N-terminus, the 247-residue chain is Sugar fermentation stimulation protein homolog (247 aa).

This sequence belongs to the SfsA family.

This chain is Sugar fermentation stimulation protein homolog, found in Aeromonas salmonicida (strain A449).